The following is a 71-amino-acid chain: Hainantoxin-X-2 (71 aa).

Residues Met-1 to Ala-26 form the signal peptide. A propeptide spanning residues Glu-27–Arg-43 is cleaved from the precursor. Cystine bridges form between Cys-52–Cys-65 and Cys-61–Cys-70.

This sequence belongs to the neurotoxin 36 family. 02 subfamily. As to expression, expressed by the venom gland.

Its subcellular location is the secreted. Reversibly blocks N-type calcium channels (Cav2.2/CACNA1B) in rat dorsal root ganglion cells. Elicits no toxic symptoms in either vertebrates or invertebrates during a period of 48 hours post-injection, when it was assayed in vivo by direct injection into mice and cockroaches. In Cyriopagopus hainanus (Chinese bird spider), this protein is Hainantoxin-X-2.